The chain runs to 298 residues: Elongation factor Ts (298 aa).

Residues 80 to 83 are involved in Mg(2+) ion dislocation from EF-Tu; sequence TDFV.

This sequence belongs to the EF-Ts family.

The protein resides in the cytoplasm. Functionally, associates with the EF-Tu.GDP complex and induces the exchange of GDP to GTP. It remains bound to the aminoacyl-tRNA.EF-Tu.GTP complex up to the GTP hydrolysis stage on the ribosome. The polypeptide is Elongation factor Ts (Paracidovorax citrulli (strain AAC00-1) (Acidovorax citrulli)).